The chain runs to 502 residues: Bifunctional purine biosynthesis protein PurH (502 aa).

The MGS-like domain maps to 1-144 (MKKRALISVF…KNFQDVVVIS (144 aa)).

The protein belongs to the PurH family.

The catalysed reaction is (6R)-10-formyltetrahydrofolate + 5-amino-1-(5-phospho-beta-D-ribosyl)imidazole-4-carboxamide = 5-formamido-1-(5-phospho-D-ribosyl)imidazole-4-carboxamide + (6S)-5,6,7,8-tetrahydrofolate. It catalyses the reaction IMP + H2O = 5-formamido-1-(5-phospho-D-ribosyl)imidazole-4-carboxamide. It functions in the pathway purine metabolism; IMP biosynthesis via de novo pathway; 5-formamido-1-(5-phospho-D-ribosyl)imidazole-4-carboxamide from 5-amino-1-(5-phospho-D-ribosyl)imidazole-4-carboxamide (10-formyl THF route): step 1/1. Its pathway is purine metabolism; IMP biosynthesis via de novo pathway; IMP from 5-formamido-1-(5-phospho-D-ribosyl)imidazole-4-carboxamide: step 1/1. This chain is Bifunctional purine biosynthesis protein PurH, found in Clostridium beijerinckii (strain ATCC 51743 / NCIMB 8052) (Clostridium acetobutylicum).